The chain runs to 162 residues: HTH-type transcriptional regulator IscR (162 aa).

The region spanning 2–131 (RLTSKGRYAV…NNITLGELVN (130 aa)) is the HTH rrf2-type domain. Residues 28 to 51 (LADISERQGISLSYLEQLFSRLRK) constitute a DNA-binding region (H-T-H motif). [2Fe-2S] cluster is bound by residues cysteine 92, cysteine 98, and cysteine 104. The tract at residues 140-162 (GRQHTHDAPRTRTQDAIDVKLRA) is disordered. Residues 143–162 (HTHDAPRTRTQDAIDVKLRA) show a composition bias toward basic and acidic residues.

[2Fe-2S] cluster serves as cofactor.

Regulates the transcription of several operons and genes involved in the biogenesis of Fe-S clusters and Fe-S-containing proteins. This Shigella flexneri protein is HTH-type transcriptional regulator IscR.